Here is a 154-residue protein sequence, read N- to C-terminus: Low molecular weight protein-tyrosine-phosphatase PtpA (154 aa).

C8 acts as the Nucleophile in catalysis. The active site involves R14. The active-site Proton donor is the D120.

Belongs to the low molecular weight phosphotyrosine protein phosphatase family.

The enzyme catalyses O-phospho-L-tyrosyl-[protein] + H2O = L-tyrosyl-[protein] + phosphate. Dephosphorylates the phosphotyrosine-containing proteins. This is Low molecular weight protein-tyrosine-phosphatase PtpA (ptpA) from Staphylococcus saprophyticus subsp. saprophyticus (strain ATCC 15305 / DSM 20229 / NCIMB 8711 / NCTC 7292 / S-41).